The primary structure comprises 252 residues: Lipoprotein PrgK (252 aa).

A signal peptide spans 1 to 17; the sequence is MIRRYLYTFLLVMTLAG. Cysteine 18 is lipidated: N-palmitoyl cysteine. Residue cysteine 18 is the site of S-diacylglycerol cysteine attachment. The chain crosses the membrane as a helical span at residues 207 to 227; the sequence is FATSWIVLIILLSVMSAGFGV.

This sequence belongs to the YscJ lipoprotein family.

The protein localises to the cell outer membrane. In terms of biological role, required for invasion of epithelial cells. Could be involved in protein secretion. The chain is Lipoprotein PrgK (prgK) from Salmonella typhimurium (strain LT2 / SGSC1412 / ATCC 700720).